The sequence spans 91 residues: Elongation factor 1-beta (91 aa).

This sequence belongs to the EF-1-beta/EF-1-delta family.

In terms of biological role, promotes the exchange of GDP for GTP in EF-1-alpha/GDP, thus allowing the regeneration of EF-1-alpha/GTP that could then be used to form the ternary complex EF-1-alpha/GTP/AAtRNA. The sequence is that of Elongation factor 1-beta from Saccharolobus islandicus (strain Y.N.15.51 / Yellowstone #2) (Sulfolobus islandicus).